The sequence spans 707 residues: Polyribonucleotide nucleotidyltransferase (707 aa).

Positions 485 and 491 each coordinate Mg(2+). One can recognise a KH domain in the interval 552-615 (PRITVINIPK…AAIKWIKGIV (64 aa)). The S1 motif domain occupies 621 to 689 (GEIYEGKVVK…DRGKVKLSMK (69 aa)).

This sequence belongs to the polyribonucleotide nucleotidyltransferase family. Mg(2+) serves as cofactor.

It is found in the cytoplasm. It catalyses the reaction RNA(n+1) + phosphate = RNA(n) + a ribonucleoside 5'-diphosphate. In terms of biological role, involved in mRNA degradation. Catalyzes the phosphorolysis of single-stranded polyribonucleotides processively in the 3'- to 5'-direction. The sequence is that of Polyribonucleotide nucleotidyltransferase from Rhodospirillum centenum (strain ATCC 51521 / SW).